The chain runs to 361 residues: MAGNTIGQLFRVTTFGESHGLALGCIVDGVPPGIPLTEADLQHDLDRRRPGTSRYTTQRREPDQVKILSGVFEGVTTGTSIGLLIENTDQRSQDYSAIKDVFRPGHADYTYEQKYGLRDYRGGGRSSARETAMRVAAGAIAKKYLAEKFGIEIRGCLTQMGDIPLEIKDWSLVEQNPFFCPDPDKIDALDELMRALKKEGDSIGAKVTVVASGVPAGLGEPVFDRLDADIAHALMSINAVKGVEIGDGFDVVALRGSQNRDEITKDGFQSNHAGGILGGISSGQQIIAHMALKPTSSITVPGRTINRFGEEVEMITKGRHDPCVGIRAVPIAEAMLAIVLMDHLLRQRAQNADVKTDIPRW.

2 residues coordinate NADP(+): arginine 48 and arginine 54. FMN contacts are provided by residues 125-127, 238-239, glycine 278, 293-297, and arginine 319; these read RSS, NA, and KPTSS.

Belongs to the chorismate synthase family. In terms of assembly, homotetramer. Requires FMNH2 as cofactor.

The enzyme catalyses 5-O-(1-carboxyvinyl)-3-phosphoshikimate = chorismate + phosphate. Its pathway is metabolic intermediate biosynthesis; chorismate biosynthesis; chorismate from D-erythrose 4-phosphate and phosphoenolpyruvate: step 7/7. Catalyzes the anti-1,4-elimination of the C-3 phosphate and the C-6 proR hydrogen from 5-enolpyruvylshikimate-3-phosphate (EPSP) to yield chorismate, which is the branch point compound that serves as the starting substrate for the three terminal pathways of aromatic amino acid biosynthesis. This reaction introduces a second double bond into the aromatic ring system. This is Chorismate synthase from Escherichia coli (strain SE11).